The chain runs to 85 residues: U4-theraphotoxin-Hhn1u (85 aa).

The first 22 residues, Met1–Ala22, serve as a signal peptide directing secretion. Residues Glu23–Arg48 constitute a propeptide that is removed on maturation. 3 disulfide bridges follow: Cys52–Cys66, Cys56–Cys77, and Cys71–Cys82.

Belongs to the neurotoxin 12 (Hwtx-2) family. 02 (Hwtx-2) subfamily. In terms of tissue distribution, expressed by the venom gland.

The protein resides in the secreted. In terms of biological role, postsynaptic neurotoxin. This Cyriopagopus hainanus (Chinese bird spider) protein is U4-theraphotoxin-Hhn1u.